A 359-amino-acid chain; its full sequence is 4-hydroxy-2-oxovalerate aldolase 1 (359 aa).

The region spanning 23 to 275 (VRVTDTSLRD…KTGIDFFDIA (253 aa)) is the Pyruvate carboxyltransferase domain. 31-32 (RD) is a binding site for substrate. Asp-32 is a Mn(2+) binding site. The Proton acceptor role is filled by His-35. Substrate is bound by residues Ser-185 and His-214. Positions 214 and 216 each coordinate Mn(2+). Tyr-305 is a binding site for substrate.

Belongs to the 4-hydroxy-2-oxovalerate aldolase family.

It carries out the reaction (S)-4-hydroxy-2-oxopentanoate = acetaldehyde + pyruvate. The protein is 4-hydroxy-2-oxovalerate aldolase 1 of Mycobacteroides abscessus (strain ATCC 19977 / DSM 44196 / CCUG 20993 / CIP 104536 / JCM 13569 / NCTC 13031 / TMC 1543 / L948) (Mycobacterium abscessus).